The chain runs to 49 residues: Heme exporter protein C (49 aa).

It belongs to the CcmC/CycZ/HelC family.

The protein resides in the cell inner membrane. Its function is as follows. Required for the export of heme to the periplasm for the biogenesis of c-type cytochromes. The protein is Heme exporter protein C of Rhizobium leguminosarum bv. viciae.